Here is a 367-residue protein sequence, read N- to C-terminus: Putrescine-binding periplasmic protein SpuD (367 aa).

The signal sequence occupies residues 1–24; sequence MMKRFGKTLLALTLAGSVAGMAQA. Position 36 to 37 (36 to 37) interacts with putrescine; sequence SD. Cys-173 and Cys-236 are joined by a disulfide. Positions 244 and 275 each coordinate putrescine.

Belongs to the bacterial solute-binding protein PotD/PotF family.

It is found in the periplasm. It localises to the secreted. Its function is as follows. Putrescine-binding protein probably required for putrescine uptake into cells. Binds putrescine with high affinity, spermidine with relatively low affinity. Does not bind cadaverine or spermine. Putrescine binding induces large inter-domain conformational changes. This chain is Putrescine-binding periplasmic protein SpuD (spuD), found in Pseudomonas aeruginosa (strain UCBPP-PA14).